The chain runs to 96 residues: Phosphoribosyl-ATP pyrophosphatase (96 aa).

The protein belongs to the PRA-PH family.

It localises to the cytoplasm. It carries out the reaction 1-(5-phospho-beta-D-ribosyl)-ATP + H2O = 1-(5-phospho-beta-D-ribosyl)-5'-AMP + diphosphate + H(+). It participates in amino-acid biosynthesis; L-histidine biosynthesis; L-histidine from 5-phospho-alpha-D-ribose 1-diphosphate: step 2/9. The polypeptide is Phosphoribosyl-ATP pyrophosphatase (Methanococcus aeolicus (strain ATCC BAA-1280 / DSM 17508 / OCM 812 / Nankai-3)).